The following is a 242-amino-acid chain: GATA zinc finger domain-containing protein 1 (242 aa).

The GATA-type zinc finger occupies 9–33 (CAVCKTQSSSMWKKGNQGEILCNGC). A disordered region spans residues 44–85 (GASASSTIQQNNGGGKQSKQEIHRRSARLRSTKYKAPASEKK). Residues 45–54 (ASASSTIQQN) show a composition bias toward low complexity.

The protein localises to the nucleus. Its function is as follows. Component of some chromatin complex recruited to chromatin sites methylated 'Lys-4' of histone H3 (H3K4me), with a preference for trimethylated form (H3K4me3). In Danio rerio (Zebrafish), this protein is GATA zinc finger domain-containing protein 1 (gatad1).